Consider the following 177-residue polypeptide: Ribosome maturation factor RimM (177 aa).

The PRC barrel domain occupies 98–177 (GEEFYWRELY…RIEVDWDPGF (80 aa)).

The protein belongs to the RimM family. Binds ribosomal protein uS19.

It localises to the cytoplasm. An accessory protein needed during the final step in the assembly of 30S ribosomal subunit, possibly for assembly of the head region. Essential for efficient processing of 16S rRNA. May be needed both before and after RbfA during the maturation of 16S rRNA. It has affinity for free ribosomal 30S subunits but not for 70S ribosomes. The polypeptide is Ribosome maturation factor RimM (Photobacterium profundum (strain SS9)).